The sequence spans 234 residues: Peroxisomal coenzyme A diphosphatase ndx-8 (234 aa).

Residues 27-162 (EQDAGVLILL…TFLIDEFYMV (136 aa)) form the Nudix hydrolase domain. The short motif at 66–90 (GGMMDDEDGQNVRRTAIREAYEEVG) is the Nudix box element. Residues Glu84 and Glu88 each coordinate Mg(2+). Residues 170–190 (YPTTYGVTALMCIVVAIGLLG) form a helical membrane-spanning segment. Positions 232 to 234 (SKI) match the Microbody targeting signal motif.

Belongs to the Nudix hydrolase family. It depends on Mg(2+) as a cofactor. The cofactor is Mn(2+).

It is found in the peroxisome membrane. In terms of biological role, coenzyme A diphosphatase which mediates the cleavage of CoA into 3',5'-ADP and 4'-phosphopantetheine. The chain is Peroxisomal coenzyme A diphosphatase ndx-8 (ndx-8) from Caenorhabditis elegans.